The primary structure comprises 188 residues: Phosphoribosylglycinamide formyltransferase (188 aa).

Position 12–14 (12–14) interacts with N(1)-(5-phospho-beta-D-ribosyl)glycinamide; it reads GSN. (6R)-10-formyltetrahydrofolate-binding positions include K66, 91–94, and N108; that span reads MRLI. Catalysis depends on H110, which acts as the Proton donor.

This sequence belongs to the GART family.

It carries out the reaction N(1)-(5-phospho-beta-D-ribosyl)glycinamide + (6R)-10-formyltetrahydrofolate = N(2)-formyl-N(1)-(5-phospho-beta-D-ribosyl)glycinamide + (6S)-5,6,7,8-tetrahydrofolate + H(+). It functions in the pathway purine metabolism; IMP biosynthesis via de novo pathway; N(2)-formyl-N(1)-(5-phospho-D-ribosyl)glycinamide from N(1)-(5-phospho-D-ribosyl)glycinamide (10-formyl THF route): step 1/1. In terms of biological role, catalyzes the transfer of a formyl group from 10-formyltetrahydrofolate to 5-phospho-ribosyl-glycinamide (GAR), producing 5-phospho-ribosyl-N-formylglycinamide (FGAR) and tetrahydrofolate. The chain is Phosphoribosylglycinamide formyltransferase from Staphylococcus aureus (strain COL).